Here is a 295-residue protein sequence, read N- to C-terminus: MTATRLDGNAVAADVRSAVAAAVSALPGQPCLAVVLVGEDPASEVYVRNKVKMTEAAGMVSIHHRLPADTGQAEVERLIESLNADPEVDGILLQLPLPKGLDADAAIEKINPDKDVDGLTEVSAGRLSLGKPGLRPCTPVGSVILAKRALGPDLSGKNVVVIGRSILVGKPAALLFLAENCTVTIAHSKTADLANVCRSADILVPAVGRPEMVRGDWVKPGAAVIDVGINRIPAPEKGEGKTRLVGDAHYESCAEVAGFITPVPGGVGPMTIACLLRNTVLAACARRGWTVPEGL.

Residues 163–165 (GRS), S188, and I229 contribute to the NADP(+) site.

Belongs to the tetrahydrofolate dehydrogenase/cyclohydrolase family. Homodimer.

It catalyses the reaction (6R)-5,10-methylene-5,6,7,8-tetrahydrofolate + NADP(+) = (6R)-5,10-methenyltetrahydrofolate + NADPH. The enzyme catalyses (6R)-5,10-methenyltetrahydrofolate + H2O = (6R)-10-formyltetrahydrofolate + H(+). The protein operates within one-carbon metabolism; tetrahydrofolate interconversion. Catalyzes the oxidation of 5,10-methylenetetrahydrofolate to 5,10-methenyltetrahydrofolate and then the hydrolysis of 5,10-methenyltetrahydrofolate to 10-formyltetrahydrofolate. The polypeptide is Bifunctional protein FolD (Hyphomonas neptunium (strain ATCC 15444)).